Consider the following 460-residue polypeptide: Serine incorporator 5 (460 aa).

The Extracellular portion of the chain corresponds to 1-36 (MSARCCAGQLACCCGSAGCALCCGCCPKFRQSRSTR). Residues 37–57 (FMYLFYFTLVIIPCCVMMSPS) traverse the membrane as a helical segment. At 58-89 (VMKQMTEHIPFFEDFCKGIKAGDTCENLVGYS) the chain is on the cytoplasmic side. A helical membrane pass occupies residues 90-110 (AVYRVCFGMACFFFVFCVLTF). The Extracellular portion of the chain corresponds to 111 to 124 (KVNNSKSCRASIHN). N-linked (GlcNAc...) asparagine glycosylation is present at N113. Residues 125-145 (GFWFFKLLLLGAMCSGAFFIP) form a helical membrane-spanning segment. At 146–156 (DQETFLNVWRY) the chain is on the cytoplasmic side. The chain crosses the membrane as a helical span at residues 157-177 (VGAVGSFFFICIQLLLIVEFA). The Extracellular segment spans residues 178–197 (HKWNKNWTAGTVRNKLWYAS). The N-linked (GlcNAc...) asparagine glycan is linked to N183. Residues 198–218 (LSLALIMYSIAVGGLALMAVF) traverse the membrane as a helical segment. The Cytoplasmic segment spans residues 219-229 (YTQWDDCMDNK). Residues 230-250 (ILLGVHGGLCVLISLAAISPC) traverse the membrane as a helical segment. At 251–258 (VQNRQPHS) the chain is on the extracellular side. The helical transmembrane segment at 259–279 (GLLQPGLISCYVTYLTFSALT) threads the bilayer. The Cytoplasmic segment spans residues 280 to 309 (SKPEKVVKDEHGKNVTICVPDFGQDFRRDE). The chain crosses the membrane as a helical span at residues 310–330 (SMVTWLGTLLLVVCISYSCLT). The Extracellular portion of the chain corresponds to 331–390 (STTRSSSDALQRRYGAPELEVARCCFCFGPDGEDTEEQQNVKEGPRVIYDEKKGTVYSYS). Residues 391-411 (YFHFVLLLASLYVMMTLTSWF) form a helical membrane-spanning segment. Topologically, residues 412–427 (HYENATIETFFVGSWS) are cytoplasmic. The helical transmembrane segment at 428–448 (IFWVKMASCWMCVLLYLWTLV) threads the bilayer. Residues 449 to 460 (APLCCPSRQFSV) are Extracellular-facing.

This sequence belongs to the TDE1 family. In terms of tissue distribution, brain. Expressed at high levels in the white matter and the oligodendroglial cells of the brain. Expressed at low levels in the liver.

The protein localises to the cell membrane. The catalysed reaction is a 1,2-diacyl-sn-glycero-3-phospho-L-serine(in) = a 1,2-diacyl-sn-glycero-3-phospho-L-serine(out). The enzyme catalyses a 1,2-diacyl-sn-glycero-3-phosphocholine(in) = a 1,2-diacyl-sn-glycero-3-phosphocholine(out). It catalyses the reaction a 1,2-diacyl-sn-glycero-3-phosphoethanolamine(in) = a 1,2-diacyl-sn-glycero-3-phosphoethanolamine(out). In terms of biological role, restriction factor required to restrict infectivity of gammaretroviruses: acts by inhibiting an early step of viral infection. Impairs the penetration of the viral particle into the cytoplasm. Non-ATP-dependent, non-specific lipid transporter for phosphatidylserine, phosphatidylcholine, and phosphatidylethanolamine. Functions as a scramblase that flips lipids in both directions across the membrane. Phospholipid scrambling results in gammaretroviral surface exposure of phosphatidylserine and loss of membrane asymmetry, which leads to loss of infectivity. Enhances the incorporation of serine into phosphatidylserine and sphingolipids. May play a role in providing serine molecules for the formation of myelin glycosphingolipids in oligodendrocytes. This Rattus norvegicus (Rat) protein is Serine incorporator 5 (Serinc5).